The sequence spans 132 residues: Small ribosomal subunit protein uS8 (132 aa).

This sequence belongs to the universal ribosomal protein uS8 family. Part of the 30S ribosomal subunit. Contacts proteins S5 and S12.

In terms of biological role, one of the primary rRNA binding proteins, it binds directly to 16S rRNA central domain where it helps coordinate assembly of the platform of the 30S subunit. The chain is Small ribosomal subunit protein uS8 from Ureaplasma urealyticum serovar 10 (strain ATCC 33699 / Western).